The following is a 519-amino-acid chain: GATA zinc finger domain-containing protein 8 (519 aa).

Disordered stretches follow at residues 25 to 182 (YSTG…SSSG), 198 to 249 (SNIN…SNNT), 273 to 359 (SNNM…NNKQ), and 431 to 453 (DERQ…KRRE). Residues 37–156 (TNNSQNKTNN…SSSITSPSSN (120 aa)) are compositionally biased toward low complexity. The segment covering 172 to 182 (SPNNKQVSSSG) has biased composition (polar residues). A compositionally biased stretch (low complexity) spans 273–357 (SNNMNINNQH…SNINNNNNNN (85 aa)). The stretch at 429–461 (KTDERQQKKRMESDKNAEKREKRREASRLLNNV) forms a coiled coil. Residues 462–487 (CRNCKTTETPEWRKGPDGTKSLCNAC) form a GATA-type zinc finger.

This Dictyostelium discoideum (Social amoeba) protein is GATA zinc finger domain-containing protein 8 (gtaH).